Here is a 178-residue protein sequence, read N- to C-terminus: Interleukin-10 (178 aa).

An N-terminal signal peptide occupies residues 1–18 (MPGSALLCCLALLAGVKA). Intrachain disulfides connect cysteine 30–cysteine 126 and cysteine 80–cysteine 132. Residue asparagine 67 is glycosylated (N-linked (GlcNAc...) asparagine). A glycan (N-linked (GlcNAc...) asparagine) is linked at asparagine 134.

The protein belongs to the IL-10 family. Homodimer. Interacts with IL10RA and IL10RB.

Its subcellular location is the secreted. Major immune regulatory cytokine that acts on many cells of the immune system where it has profound anti-inflammatory functions, limiting excessive tissue disruption caused by inflammation. Mechanistically, IL10 binds to its heterotetrameric receptor comprising IL10RA and IL10RB leading to JAK1 and STAT2-mediated phosphorylation of STAT3. In turn, STAT3 translocates to the nucleus where it drives expression of anti-inflammatory mediators. Targets antigen-presenting cells (APCs) such as macrophages and monocytes and inhibits their release of pro-inflammatory cytokines including granulocyte-macrophage colony-stimulating factor /GM-CSF, granulocyte colony-stimulating factor/G-CSF, IL-1 alpha, IL-1 beta, IL-6, IL-8 and TNF-alpha. Also interferes with antigen presentation by reducing the expression of MHC-class II and co-stimulatory molecules, thereby inhibiting their ability to induce T cell activation. In addition, controls the inflammatory response of macrophages by reprogramming essential metabolic pathways including mTOR signaling. This is Interleukin-10 (IL10) from Cavia porcellus (Guinea pig).